A 444-amino-acid chain; its full sequence is Phosphoglucosamine mutase (444 aa).

Ser101 (phosphoserine intermediate) is an active-site residue. Residues Ser101, Asp240, Asp242, and Asp244 each coordinate Mg(2+). Ser101 bears the Phosphoserine mark.

This sequence belongs to the phosphohexose mutase family. It depends on Mg(2+) as a cofactor. Post-translationally, activated by phosphorylation.

The catalysed reaction is alpha-D-glucosamine 1-phosphate = D-glucosamine 6-phosphate. In terms of biological role, catalyzes the conversion of glucosamine-6-phosphate to glucosamine-1-phosphate. The polypeptide is Phosphoglucosamine mutase (Aeromonas salmonicida (strain A449)).